Consider the following 513-residue polypeptide: PPE family protein PPE4 (513 aa).

3 helical membrane passes run 233–253 (IIIAFLTNPIQALITYGPLLF), 277–297 (FLLPAGLGLGLAAIAFLPIVL), and 309–329 (LAAAAVAAGSVWPAVSMAVTG). 2 disordered regions span residues 395-446 (AAAA…ERGA) and 469-513 (LAGD…HDSK).

It belongs to the mycobacterial PPE family.

Its subcellular location is the cell membrane. Functionally, important for the siderophore-mediated iron-acquisition function of ESX-3. The chain is PPE family protein PPE4 (PPE4) from Mycobacterium tuberculosis (strain CDC 1551 / Oshkosh).